A 430-amino-acid chain; its full sequence is Enolase (430 aa).

Gln164 contributes to the (2R)-2-phosphoglycerate binding site. Glu208 acts as the Proton donor in catalysis. Mg(2+)-binding residues include Asp245, Glu288, and Asp315. 4 residues coordinate (2R)-2-phosphoglycerate: Lys340, Arg369, Ser370, and Lys391. Lys340 serves as the catalytic Proton acceptor.

The protein belongs to the enolase family. It depends on Mg(2+) as a cofactor.

It is found in the cytoplasm. Its subcellular location is the secreted. The protein localises to the cell surface. It catalyses the reaction (2R)-2-phosphoglycerate = phosphoenolpyruvate + H2O. It participates in carbohydrate degradation; glycolysis; pyruvate from D-glyceraldehyde 3-phosphate: step 4/5. In terms of biological role, catalyzes the reversible conversion of 2-phosphoglycerate (2-PG) into phosphoenolpyruvate (PEP). It is essential for the degradation of carbohydrates via glycolysis. This chain is Enolase, found in Thermococcus kodakarensis (strain ATCC BAA-918 / JCM 12380 / KOD1) (Pyrococcus kodakaraensis (strain KOD1)).